The chain runs to 210 residues: Imidazole glycerol phosphate synthase subunit HisH (210 aa).

The 206-residue stretch at 3–208 (PIAIIDYGMG…GELVRHAGNA (206 aa)) folds into the Glutamine amidotransferase type-1 domain. Cys-81 acts as the Nucleophile in catalysis. Residues His-183 and Glu-185 contribute to the active site.

In terms of assembly, heterodimer of HisH and HisF.

It is found in the cytoplasm. It catalyses the reaction 5-[(5-phospho-1-deoxy-D-ribulos-1-ylimino)methylamino]-1-(5-phospho-beta-D-ribosyl)imidazole-4-carboxamide + L-glutamine = D-erythro-1-(imidazol-4-yl)glycerol 3-phosphate + 5-amino-1-(5-phospho-beta-D-ribosyl)imidazole-4-carboxamide + L-glutamate + H(+). The catalysed reaction is L-glutamine + H2O = L-glutamate + NH4(+). It participates in amino-acid biosynthesis; L-histidine biosynthesis; L-histidine from 5-phospho-alpha-D-ribose 1-diphosphate: step 5/9. In terms of biological role, IGPS catalyzes the conversion of PRFAR and glutamine to IGP, AICAR and glutamate. The HisH subunit catalyzes the hydrolysis of glutamine to glutamate and ammonia as part of the synthesis of IGP and AICAR. The resulting ammonia molecule is channeled to the active site of HisF. This is Imidazole glycerol phosphate synthase subunit HisH from Moorella thermoacetica (strain ATCC 39073 / JCM 9320).